The sequence spans 301 residues: Ribosomal protein L11 methyltransferase (301 aa).

Residues threonine 146, glycine 167, aspartate 189, and asparagine 237 each contribute to the S-adenosyl-L-methionine site.

It belongs to the methyltransferase superfamily. PrmA family.

The protein resides in the cytoplasm. It catalyses the reaction L-lysyl-[protein] + 3 S-adenosyl-L-methionine = N(6),N(6),N(6)-trimethyl-L-lysyl-[protein] + 3 S-adenosyl-L-homocysteine + 3 H(+). Its function is as follows. Methylates ribosomal protein L11. In Prochlorococcus marinus (strain MIT 9303), this protein is Ribosomal protein L11 methyltransferase.